Consider the following 836-residue polypeptide: Protein O-mannosyl-transferase TMTC2 (836 aa).

Residues 1–21 form a helical membrane-spanning segment; it reads MIAELVSSALGLALYLNTLSA. At 22–77 the chain is on the extracellular side; sequence DFCYDDSRAIKTNQDLLPETPWTHIFYNDFWGTLLTHSGSHKSYRPLCTLSFRLNH. A helical transmembrane segment spans residues 78-98; it reads AIGGLNPWSYHLVNVLLHAAV. At 99–107 the chain is on the cytoplasmic side; the sequence is TGLFTRFSK. Residues 108-128 form a helical membrane-spanning segment; it reads ALLGDGYWTFMAGLMFASHPI. The Extracellular portion of the chain corresponds to 129–132; it reads HTEA. Residues 133–153 form a helical membrane-spanning segment; the sequence is VAGIVGRADVGASLFFLLSLL. The Cytoplasmic segment spans residues 154-168; sequence CYIKHCSTRGYSART. Helical transmembrane passes span 169 to 184 and 185 to 204; these read WGWF…CSML and WKEQ…VFVF. Residues 205 to 220 are Cytoplasmic-facing; sequence HRLKMKQILPTIYKRK. A helical transmembrane segment spans residues 221–241; the sequence is NLSLFLSISLLTFWGTCLLGA. At 242–312 the chain is on the extracellular side; that stretch reads RLYWMGNKPP…KTVCDWRNLH (71 aa). The helical transmembrane segment at 313 to 333 threads the bilayer; that stretch reads TVAFYSGLLLLAYCGLKNPSL. The Cytoplasmic segment spans residues 334–392; that stretch reads EGECNGKALTNGKQNANGHSCHSDVEYRNSEMKPSFASKVENGIKNCVPQRTQLPSTEN. Residues 393–415 form a helical membrane-spanning segment; sequence IVILSLSLLIIPFIPATNLFFYV. The Extracellular portion of the chain corresponds to 416–422; sequence GFVIAER. A helical transmembrane segment spans residues 423-443; the sequence is VLYIPSMGFCLLITVGARALY. The Cytoplasmic segment spans residues 444–449; sequence VKVQKR. Residues 450–470 form a helical membrane-spanning segment; that stretch reads FLKSLVFYATATLIVFYGVKT. At 471-836 the chain is on the extracellular side; that stretch reads AIRNGDWQNE…EKQGLKTSKT (366 aa). TPR repeat units lie at residues 493-526, 527-560, 561-594, 606-639, 643-676, 677-710, 711-744, 745-778, and 779-812; these read AKAW…RSNM, ADML…RPTL, ASAY…PDEN, TSCL…MPRH, QSLY…KTDH, IPAH…DPTK, GNCY…DNTE, FDVV…RPNY, and PAAL…KPDD.

This sequence belongs to the TMTC family.

Its subcellular location is the membrane. It localises to the endoplasmic reticulum. The enzyme catalyses a di-trans,poly-cis-dolichyl beta-D-mannosyl phosphate + L-seryl-[protein] = 3-O-(alpha-D-mannosyl)-L-seryl-[protein] + a di-trans,poly-cis-dolichyl phosphate + H(+). The catalysed reaction is a di-trans,poly-cis-dolichyl beta-D-mannosyl phosphate + L-threonyl-[protein] = 3-O-(alpha-D-mannosyl)-L-threonyl-[protein] + a di-trans,poly-cis-dolichyl phosphate + H(+). It participates in protein modification; protein glycosylation. Its function is as follows. Transfers mannosyl residues to the hydroxyl group of serine or threonine residues. The 4 members of the TMTC family are O-mannosyl-transferases dedicated primarily to the cadherin superfamily, each member seems to have a distinct role in decorating the cadherin domains with O-linked mannose glycans at specific regions. Also acts as O-mannosyl-transferase on other proteins such as PDIA3. The chain is Protein O-mannosyl-transferase TMTC2 from Mus musculus (Mouse).